Here is a 235-residue protein sequence, read N- to C-terminus: Type III pantothenate kinase (235 aa).

Residue 6–13 (DVGNTSLK) coordinates ATP. Substrate-binding positions include Tyr79 and 86–89 (GIDR). Asp88 serves as the catalytic Proton acceptor. Asp109 provides a ligand contact to K(+). Thr112 lines the ATP pocket. Thr164 contacts substrate.

The protein belongs to the type III pantothenate kinase family. In terms of assembly, homodimer. The cofactor is NH4(+). It depends on K(+) as a cofactor.

The protein localises to the cytoplasm. It catalyses the reaction (R)-pantothenate + ATP = (R)-4'-phosphopantothenate + ADP + H(+). The protein operates within cofactor biosynthesis; coenzyme A biosynthesis; CoA from (R)-pantothenate: step 1/5. Its function is as follows. Catalyzes the phosphorylation of pantothenate (Pan), the first step in CoA biosynthesis. This chain is Type III pantothenate kinase, found in Pseudoalteromonas translucida (strain TAC 125).